Consider the following 541-residue polypeptide: Glucose-6-phosphate isomerase (541 aa).

Glu-346 acts as the Proton donor in catalysis. Residues His-377 and Lys-506 contribute to the active site.

It belongs to the GPI family.

The protein localises to the cytoplasm. The enzyme catalyses alpha-D-glucose 6-phosphate = beta-D-fructose 6-phosphate. The protein operates within carbohydrate biosynthesis; gluconeogenesis. Its pathway is carbohydrate degradation; glycolysis; D-glyceraldehyde 3-phosphate and glycerone phosphate from D-glucose: step 2/4. In terms of biological role, catalyzes the reversible isomerization of glucose-6-phosphate to fructose-6-phosphate. This Sinorhizobium medicae (strain WSM419) (Ensifer medicae) protein is Glucose-6-phosphate isomerase.